A 58-amino-acid chain; its full sequence is Small ribosomal subunit protein bS21 (58 aa).

This sequence belongs to the bacterial ribosomal protein bS21 family.

The sequence is that of Small ribosomal subunit protein bS21 from Prochlorococcus marinus (strain MIT 9515).